The sequence spans 397 residues: 16-O-methyltransferase bsc6 (397 aa).

Residue Asp-262 coordinates S-adenosyl-L-methionine. The active-site Proton acceptor is His-302.

The protein belongs to the class I-like SAM-binding methyltransferase superfamily. Cation-independent O-methyltransferase family. S-adenosyl-L-methionine is required as a cofactor.

It functions in the pathway mycotoxin biosynthesis. In terms of biological role, 16-O-methyltransferase; part of the gene cluster that mediates the biosynthesis of the diterpene glucoside brassicicene C. In the first step of the brassicicene C biosynthesis, the bifunctional diterpene synthase bsc8 that possesses both prenyl transferase and terpene cyclase activity, converts isopentenyl diphosphate and dimethylallyl diphosphate into geranylgeranyl diphosphate (GGDP) that is further converted into fusicocca-2,10(14)-diene, the first precursor for brassicicene C. Fusicocca-2,10(14)-diene is then substrate of cytochrome P450 monooxygenase bsc1 for hydroxylation at the C-8 position. Oxidation at C-16 position to aldehyde is then catalyzed by the cytochrome P450 monooyxygenase bsc7, yielding fusicocca-2,10(14)-diene-8-beta,16-diol. Follows the isomerization of the double bond and reduction of aldehyde to alcohol catalyzed by the short-chain dehydrogenase/reductase bsc3 to yield the diol compound fusicocca-1,10(14)-diene-8 beta,16-diol. The next step is the oxidation at the C-3 position of fusicocca-2,10(14)-diene-8-beta,16-diol catalyzed by the alpha-ketoglutarate dependent dioxygenase bsc9, to produce a triol compound. Methylation of the hydroxy group at position 16 is performed by the methyltransferase bsc6. 16-O-methylation is followed by oxidation at the C-13 position to ketone and an alkyl shift of the methyl group leads to brassicicene C. Although the probable acetyltransferase bsc4 is included in the gene cluster, no acetylation reactions are necessary for brassicicene C biosynthesis. However, the fact that brassicicene E, which is a structurally related compound having an acetoxy group at position 12, was previously isolated from another strain of A.brassicicola suggests that the ATCC 96836 strain might also produce a small amount of brassicicene E. The chain is 16-O-methyltransferase bsc6 from Alternaria brassicicola (Dark leaf spot agent).